The primary structure comprises 195 residues: MKIIGLTGSIAMGKSTVADFFRQAGISVFSADEAVYKLYKSEPTLSLIEYKFPGVFENGKVNRQKLSEILINDNEKLQTLEKIIHPLVQEKEKKFIDTARQQGEKLVVLDIPLLLETKGEKRVDSVVVVSAPLAIQKERAMIRQNMSEKKFAFINGRQMSDEKKRARADFIIDTGKDLENTREQVLFVIKSLLKN.

The DPCK domain maps to 3 to 195 (IIGLTGSIAM…LFVIKSLLKN (193 aa)). 11–16 (AMGKST) contributes to the ATP binding site.

This sequence belongs to the CoaE family.

It is found in the cytoplasm. The enzyme catalyses 3'-dephospho-CoA + ATP = ADP + CoA + H(+). The protein operates within cofactor biosynthesis; coenzyme A biosynthesis; CoA from (R)-pantothenate: step 5/5. In terms of biological role, catalyzes the phosphorylation of the 3'-hydroxyl group of dephosphocoenzyme A to form coenzyme A. This Bartonella henselae (strain ATCC 49882 / DSM 28221 / CCUG 30454 / Houston 1) (Rochalimaea henselae) protein is Dephospho-CoA kinase.